A 221-amino-acid polypeptide reads, in one-letter code: Endonuclease V (221 aa).

Mg(2+) contacts are provided by Asp-43 and Asp-111.

This sequence belongs to the endonuclease V family. It depends on Mg(2+) as a cofactor.

The protein resides in the cytoplasm. The catalysed reaction is Endonucleolytic cleavage at apurinic or apyrimidinic sites to products with a 5'-phosphate.. Functionally, DNA repair enzyme involved in the repair of deaminated bases. Selectively cleaves double-stranded DNA at the second phosphodiester bond 3' to a deoxyinosine leaving behind the intact lesion on the nicked DNA. The chain is Endonuclease V from Azotobacter vinelandii (strain DJ / ATCC BAA-1303).